Reading from the N-terminus, the 568-residue chain is PWWP domain-containing protein2 (568 aa).

The segment covering 1 to 19 (MTEIKDSSVKDENPGKQEE) has biased composition (basic and acidic residues). 3 disordered regions span residues 1–126 (MTEI…YKPG), 213–340 (QSTP…DVAK), and 465–568 (IASL…TGQK). Polar residues predominate over residues 29-46 (MSTATNNSKNIETTSSNG). Composition is skewed to basic and acidic residues over residues 48–88 (EDIK…KTIE) and 100–122 (KSQK…ERVN). A PWWP domain is found at 125–189 (PGMRVLTKMS…SDSLTPLTSE (65 aa)). Low complexity predominate over residues 214 to 228 (STPDLDSLSVPSSES). The span at 229–249 (EVSEEESDQEMSEPSPIEEDY) shows a compositional bias: acidic residues. Basic residues predominate over residues 255–266 (RRITRKGTKKKT). The span at 281 to 292 (LNASSNVSSNPA) shows a compositional bias: polar residues. Residues 325–336 (KEEEEGSVANEE) are compositionally biased toward acidic residues. 2 stretches are compositionally biased toward basic and acidic residues: residues 489-500 (KQNEDNEDKVKA) and 514-541 (DASK…KDFA).

The sequence is that of PWWP domain-containing protein2 (pdp2) from Schizosaccharomyces pombe (strain 972 / ATCC 24843) (Fission yeast).